Reading from the N-terminus, the 372-residue chain is Cobalt-precorrin-5B C(1)-methyltransferase (372 aa).

The protein belongs to the CbiD family.

The catalysed reaction is Co-precorrin-5B + S-adenosyl-L-methionine = Co-precorrin-6A + S-adenosyl-L-homocysteine. The protein operates within cofactor biosynthesis; adenosylcobalamin biosynthesis; cob(II)yrinate a,c-diamide from sirohydrochlorin (anaerobic route): step 6/10. In terms of biological role, catalyzes the methylation of C-1 in cobalt-precorrin-5B to form cobalt-precorrin-6A. The polypeptide is Cobalt-precorrin-5B C(1)-methyltransferase (Geobacillus thermodenitrificans (strain NG80-2)).